The following is a 502-amino-acid chain: UPF0371 protein CLD_0424 (502 aa).

It belongs to the UPF0371 family.

In Clostridium botulinum (strain Okra / Type B1), this protein is UPF0371 protein CLD_0424.